A 685-amino-acid chain; its full sequence is MSTFLLEIGLEEVPAHLVTSSENQLIERTRNFLAEHRLTVGAINPYSTPRRLAVELTDVAEKSESLSEEKRGPSIERAKDANGEWTKAAMGFARGQGATPDDFETRDGYVWLTKHTEGVPAKDILVKIGAEVVSEMKFSTYMKWANNAFLYVRPIRWLVALFDKEVVDFHVLDVQTGRVTRGHRFLSNEHVEISSADDYVSKLESASVVVNAEVRKNAIRSQLTAIAKQNNWSLELDTDAAQNLLEEVNNIVEWPTAFAGTFDKKYLEIPDEVLITSMREHQRFFFVTNHDGKLLPHFLSVRNGNKEHLDNVIAGNEKVLVARLEDAEFFYKEDQTKTIADYMEKVKKLVFHEKIGTVYEHMQRTGVLAQALAQSLNFDEQQLSNVSRAAEIYKFDLMTGMVGEFDELQGIMGEHYAKLFGENPAVAAAIKEHYMPTSATGKIAESDIGAVLAVADKLDAIVTFFAADLTPSGSNDPYGLRRAATGIVRTLQEKNWHIALKPVLTQFAQSQGEVAAADITAVLEFILDRVRKLTLDDGVRQDLVSAGVSRSGNTDVVYLIDRINVLAAHSKDNDFRDVIESLTRVDRLAVKQLTNDSVDPSLFENDAEKELYQATYALNLSHLVKEGADEVYTTLAGLQSPISTYFEATMVNTENAAVKNNRYAQLNVIHRLISELGDLEQIVIK.

This sequence belongs to the class-II aminoacyl-tRNA synthetase family. As to quaternary structure, tetramer of two alpha and two beta subunits.

It is found in the cytoplasm. It catalyses the reaction tRNA(Gly) + glycine + ATP = glycyl-tRNA(Gly) + AMP + diphosphate. This is Glycine--tRNA ligase beta subunit from Leuconostoc mesenteroides subsp. mesenteroides (strain ATCC 8293 / DSM 20343 / BCRC 11652 / CCM 1803 / JCM 6124 / NCDO 523 / NBRC 100496 / NCIMB 8023 / NCTC 12954 / NRRL B-1118 / 37Y).